A 161-amino-acid chain; its full sequence is Ragulator complex protein LAMTOR1 (161 aa).

The interval 1 to 43 (MGCCYSSENEDSDQDREERKLLLDPSSTPTKALNGAEPNYHSL) is disordered. A lipid anchor (N-myristoyl glycine) is attached at Gly-2. S-palmitoyl cysteine attachment occurs at residues Cys-3 and Cys-4. Residue Lys-20 forms a Glycyl lysine isopeptide (Lys-Gly) (interchain with G-Cter in ubiquitin) linkage. Ser-27 carries the phosphoserine modification. Thr-28 carries the phosphothreonine modification. Lys-31 is covalently cross-linked (Glycyl lysine isopeptide (Lys-Gly) (interchain with G-Cter in ubiquitin)). A phosphoserine mark is found at Ser-42 and Ser-56. Residue Lys-60 forms a Glycyl lysine isopeptide (Lys-Gly) (interchain with G-Cter in ubiquitin) linkage. A Phosphoserine modification is found at Ser-98. Residues Lys-103 and Lys-104 each participate in a glycyl lysine isopeptide (Lys-Gly) (interchain with G-Cter in ubiquitin) cross-link. The interval 121 to 161 (SEPIPFSDLQQVSRIAAYAYSALSQIRVDAKEELVVQFGIP) is interaction with LAMTOR2 and LAMTOR3. Ser-141 bears the Phosphoserine mark.

The protein belongs to the LAMTOR1 family. Part of the Ragulator complex composed of LAMTOR1, LAMTOR2, LAMTOR3, LAMTOR4 and LAMTOR5. LAMTOR4 and LAMTOR5 form a heterodimer that interacts, through LAMTOR1, with a LAMTOR2, LAMTOR3 heterodimer. Interacts with LAMTOR2 and LAMTOR3; the interaction is direct. The Ragulator complex interacts with both the mTORC1 complex and heterodimers constituted of the Rag GTPases RagA/RRAGA, RagB/RRAGB, RagC/RRAGC and RagD/RRAGD; regulated by amino acid availability. The Ragulator complex interacts with SLC38A9; the probable amino acid sensor. Component of the lysosomal folliculin complex (LFC), composed of FLCN, FNIP1 (or FNIP2), RagA/RRAGA or RagB/RRAGB GDP-bound, RagC/RRAGC or RagD/RRAGD GTP-bound, and Ragulator. Associates with the lysosomal V-ATPase complex; interaction promotes the guanine nucleotide exchange factor (GEF) of the Ragulator complex. Interacts with MMP14. Interacts with CDKN1B; prevents the interaction of CDKN1B with RHOA leaving RHOA in a form accessible to activation by ARHGEF2. Interacts with PIP4P1. In terms of processing, N-terminal myristoylation and palmitoylation mediates its recruitment to lysosome membranes, thereby promoting localization of the Ragulator complex to lysosomes. N-myristoylation by NMT1 is required for palmitoylation at Cys-3 and Cys-4. Ubiquitinated at Lys-60, Lys-103 and Lys-104 by UBE3A in neurons, promoting its degradation by the proteasome, thereby limiting mTORC1 signaling and activity-dependent synaptic remodeling. Ubiquitination at Lys-20 impairs the association with the lysosomal V-ATPase complex. Deubiquitination at Lys-20 by USP32 promotes the association with the lysosomal V-ATPase complex and subsequent activation of the mTORC1 complex.

The protein resides in the lysosome membrane. Its subcellular location is the late endosome membrane. Functionally, key component of the Ragulator complex, a multiprotein complex involved in amino acid sensing and activation of mTORC1, a signaling complex promoting cell growth in response to growth factors, energy levels, and amino acids. Activated by amino acids through a mechanism involving the lysosomal V-ATPase, the Ragulator plays a dual role for the small GTPases Rag (RagA/RRAGA, RagB/RRAGB, RagC/RRAGC and/or RagD/RRAGD): it (1) acts as a guanine nucleotide exchange factor (GEF), activating the small GTPases Rag and (2) mediates recruitment of Rag GTPases to the lysosome membrane. Activated Ragulator and Rag GTPases function as a scaffold recruiting mTORC1 to lysosomes where it is in turn activated. LAMTOR1 is directly responsible for anchoring the Ragulator complex to the lysosomal membrane. LAMTOR1 wraps around the other subunits of the Ragulator complex to hold them in place and interacts with the Rag GTPases, thereby playing a key role in the recruitment of the mTORC1 complex to lysosomes. Also involved in the control of embryonic stem cells differentiation via non-canonical RagC/RRAGC and RagD/RRAGD activation: together with FLCN, it is necessary to recruit and activate RagC/RRAGC and RagD/RRAGD at the lysosomes, and to induce exit of embryonic stem cells from pluripotency via non-canonical, mTOR-independent TFE3 inactivation. Also required for late endosomes/lysosomes biogenesis it may regulate both the recycling of receptors through endosomes and the MAPK signaling pathway through recruitment of some of its components to late endosomes. May be involved in cholesterol homeostasis regulating LDL uptake and cholesterol release from late endosomes/lysosomes. May also play a role in RHOA activation. The polypeptide is Ragulator complex protein LAMTOR1 (Mus musculus (Mouse)).